The sequence spans 590 residues: Aspartate--tRNA(Asp/Asn) ligase (590 aa).

Residue Glu175 coordinates L-aspartate. Residues 199–202 (QQYK) form an aspartate region. The L-aspartate site is built by Arg221 and His450. Residue 221-223 (RDE) coordinates ATP. Glu484 contributes to the ATP binding site. Arg491 serves as a coordination point for L-aspartate. Residue 536 to 539 (GVDR) participates in ATP binding.

The protein belongs to the class-II aminoacyl-tRNA synthetase family. Type 1 subfamily. Homodimer.

The protein localises to the cytoplasm. The enzyme catalyses tRNA(Asx) + L-aspartate + ATP = L-aspartyl-tRNA(Asx) + AMP + diphosphate. Its function is as follows. Aspartyl-tRNA synthetase with relaxed tRNA specificity since it is able to aspartylate not only its cognate tRNA(Asp) but also tRNA(Asn). Reaction proceeds in two steps: L-aspartate is first activated by ATP to form Asp-AMP and then transferred to the acceptor end of tRNA(Asp/Asn). This is Aspartate--tRNA(Asp/Asn) ligase from Rhodopseudomonas palustris (strain BisB18).